A 299-amino-acid polypeptide reads, in one-letter code: MEHFDASLSTYFKAFLGPRDTRVKGWFLLDNYIPTFVCSVIYLLIVWLGPKYMKNRQPFSCRGILQLYNLGLTLLSLYMFYELVTGVWEGKYNFFCQGTRSAGESDMKIIRVLWWYYFSKLIEFMDTFFFILRKNNHQITVLHVYHHATMLNIWWFVMNWVPCGHSYFGATLNSFIHVLMYSYYGLSSIPSMRPYLWWKKYITQGQLVQFVLTIIQTTCGVFWPCSFPLGWLFFQIGYMISLIALFTNFYIQTYNKKGASRRKDHLKGHQNGSVAAVNGHTNSFPSLENSVKPRKQRKD.

The residue at position 1 (Met1) is an N-acetylmethionine. Transmembrane regions (helical) follow at residues 26 to 46, 64 to 84, 112 to 132, 139 to 158, 168 to 187, 205 to 225, and 227 to 247; these read WFLL…LLIV, ILQL…YELV, VLWW…FFIL, ITVL…WFVM, FGAT…YGLS, GQLV…FWPC, and FPLG…ALFT. The disordered stretch occupies residues 274-299; the sequence is VAAVNGHTNSFPSLENSVKPRKQRKD. The span at 279–289 shows a compositional bias: polar residues; it reads GHTNSFPSLEN.

This sequence belongs to the ELO family. ELOVL5 subfamily. In terms of assembly, interacts with TECR.

It is found in the endoplasmic reticulum membrane. The protein resides in the cell projection. The protein localises to the dendrite. The catalysed reaction is a very-long-chain acyl-CoA + malonyl-CoA + H(+) = a very-long-chain 3-oxoacyl-CoA + CO2 + CoA. The enzyme catalyses (6Z,9Z,12Z)-octadecatrienoyl-CoA + malonyl-CoA + H(+) = (8Z,11Z,14Z)-3-oxoeicosatrienoyl-CoA + CO2 + CoA. It catalyses the reaction (9Z,12Z,15Z)-octadecatrienoyl-CoA + malonyl-CoA + H(+) = (11Z,14Z,17Z)-3-oxoeicosatrienoyl-CoA + CO2 + CoA. It carries out the reaction (9Z)-hexadecenoyl-CoA + malonyl-CoA + H(+) = 3-oxo-(11Z)-octadecenoyl-CoA + CO2 + CoA. The catalysed reaction is (9Z)-octadecenoyl-CoA + malonyl-CoA + H(+) = 3-oxo-(11Z)-eicosenoyl-CoA + CO2 + CoA. The enzyme catalyses (11Z)-octadecenoyl-CoA + malonyl-CoA + H(+) = 3-oxo-(13Z)-eicosenoyl-CoA + CO2 + CoA. It catalyses the reaction (9Z,12Z)-octadecadienoyl-CoA + malonyl-CoA + H(+) = (11Z,14Z)-3-oxoicosa-11,14-dienoyl-CoA + CO2 + CoA. It carries out the reaction (6Z,9Z,12Z,15Z)-octadecatetraenoyl-CoA + malonyl-CoA + H(+) = (8Z,11Z,14Z,17Z)-3-oxoicosatetraenoyl-CoA + CO2 + CoA. The catalysed reaction is (5Z,8Z,11Z,14Z)-eicosatetraenoyl-CoA + malonyl-CoA + H(+) = (7Z,10Z,13Z,16Z)-3-oxodocosatetraenoyl-CoA + CO2 + CoA. The enzyme catalyses (5Z,8Z,11Z,14Z,17Z)-eicosapentaenoyl-CoA + malonyl-CoA + H(+) = 3-oxo-(7Z,10Z,13Z,16Z,19Z)-docosapentaenoyl-CoA + CO2 + CoA. Its pathway is lipid metabolism; polyunsaturated fatty acid biosynthesis. Its function is as follows. Catalyzes the first and rate-limiting reaction of the four reactions that constitute the long-chain fatty acids elongation cycle. This endoplasmic reticulum-bound enzymatic process allows the addition of 2 carbons to the chain of long- and very long-chain fatty acids (VLCFAs) per cycle. Condensing enzyme that acts specifically toward polyunsaturated acyl-CoA with the higher activity toward C18:3(n-6) acyl-CoA. May participate in the production of monounsaturated and of polyunsaturated VLCFAs of different chain lengths that are involved in multiple biological processes as precursors of membrane lipids and lipid mediators. In conditions where the essential linoleic and alpha linoleic fatty acids are lacking it is also involved in the synthesis of Mead acid from oleic acid. The polypeptide is Very long chain fatty acid elongase 5 (Mus musculus (Mouse)).